The primary structure comprises 241 residues: Isoprenyl transferase (241 aa).

Aspartate 17 is a catalytic residue. Mg(2+) is bound at residue aspartate 17. Substrate is bound by residues glycine 18–arginine 21, tryptophan 22, arginine 30, histidine 34, and serine 62–glutamate 64. The active-site Proton acceptor is the asparagine 65. Substrate-binding positions include tryptophan 66, arginine 68, arginine 186, and arginine 192–serine 194. Glutamate 205 is a binding site for Mg(2+).

Belongs to the UPP synthase family. As to quaternary structure, homodimer. Requires Mg(2+) as cofactor.

Functionally, catalyzes the condensation of isopentenyl diphosphate (IPP) with allylic pyrophosphates generating different type of terpenoids. The chain is Isoprenyl transferase from Leptospira interrogans serogroup Icterohaemorrhagiae serovar copenhageni (strain Fiocruz L1-130).